Reading from the N-terminus, the 927-residue chain is Non-lysosomal glucosylceramidase (927 aa).

Residues 32–62 form a disordered region; the sequence is EETGGTKDVQVTDCKSPEDSRPPKETDCCNP. The segment covering 46 to 58 has biased composition (basic and acidic residues); it reads KSPEDSRPPKETD.

The protein belongs to the non-lysosomal glucosylceramidase family. Widely expressed. Mainly expressed in brain, heart, skeletal muscle, kidney and placenta and expressed at lower levels in liver, spleen, small intestine and lung. Detectable in colon, thymus and peripheral blood leukocytes.

It is found in the endoplasmic reticulum membrane. Its subcellular location is the golgi apparatus membrane. The enzyme catalyses a beta-D-glucosyl-(1&lt;-&gt;1')-N-acylsphing-4-enine + H2O = an N-acylsphing-4-enine + D-glucose. It catalyses the reaction a beta-D-galactosyl-(1&lt;-&gt;1')-N-acylsphing-4-enine + H2O = an N-acylsphing-4-enine + D-galactose. It carries out the reaction beta-D-glucosyl-(1-&gt;3)-O-lithocholate + H2O = lithocholate + D-glucose. The catalysed reaction is beta-D-glucosyl-(1-&gt;3)-O-chenodeoxycholate + H2O = chenodeoxycholate + D-glucose. The enzyme catalyses a di-trans,poly-cis-dolichyl beta-D-glucosyl phosphate + chenodeoxycholate = beta-D-glucosyl-(1-&gt;3)-O-chenodeoxycholate + a di-trans,poly-cis-dolichyl phosphate + H(+). It catalyses the reaction octyl beta-D-glucose + chenodeoxycholate = beta-D-glucosyl-(1-&gt;3)-O-chenodeoxycholate + octan-1-ol. It carries out the reaction cholesteryl 3-beta-D-glucoside + H2O = cholesterol + D-glucose. The catalysed reaction is a beta-D-glucosyl-(1&lt;-&gt;1')-N-acylsphing-4-enine + cholesterol = cholesteryl 3-beta-D-glucoside + an N-acylsphing-4-enine. The enzyme catalyses beta-D-glucosyl-N-(9Z-octadecenoyl)-sphing-4E-enine + cholesterol = N-(9Z-octadecenoyl)-sphing-4-enine + cholesteryl 3-beta-D-glucoside. It catalyses the reaction a beta-D-galactosyl-(1&lt;-&gt;1')-N-acylsphing-4-enine + cholesterol = cholesteryl 3-beta-D-galactoside + an N-acylsphing-4-enine. It carries out the reaction 1-(beta-D-galactosyl)-N-dodecanoylsphing-4-enine + cholesterol = cholesteryl 3-beta-D-galactoside + N-dodecanoylsphing-4-enine. It functions in the pathway lipid metabolism; sphingolipid metabolism. Its pathway is steroid metabolism; cholesterol metabolism. Its activity is regulated as follows. Inhibited by AMP-DMN/N -((5-adamantane-1-yl-methoxy)pentyl)-deoxynojirimycin. Activated by Mn(2+), Co(2+) and Mg(2+) and inhibited by Zn(2+). Enzymatic activity is dependent on membrane association and requires the presence of lipids. The membrane-associated enzyme is not inhibited by condutiriol B epoxide and bromocondutiriol B epoxide. Non-lysosomal glucosylceramidase that catalyzes the hydrolysis of glucosylceramides/GlcCers (such as beta-D-glucosyl-(1&lt;-&gt;1')-N-acylsphing-4-enine) to free glucose and ceramides (such as N-acylsphing-4-enine). GlcCers are membrane glycosphingolipids that have a wide intracellular distribution. They are the main precursors of more complex glycosphingolipids that play a role in cellular growth, differentiation, adhesion, signaling, cytoskeletal dynamics and membrane properties. Involved in the transglucosylation of cholesterol, transfers glucose from GlcCer to cholesterol, thereby modifying its water solubility and biological properties. Under specific conditions, may catalyze the reverse reaction, transferring glucose from cholesteryl-3-beta-D-glucoside to ceramide (such as N-acylsphing-4-enine). May play a role in the metabolism of bile acids. Able to hydrolyze bile acid 3-O-glucosides as well as to produce bile acid-glucose conjugates thanks to a bile acid glucosyl transferase activity. Catalyzes the hydrolysis of galactosylceramides/GalCers (such as beta-D-galactosyl-(1&lt;-&gt;1')-N-acylsphing-4-enine), as well as the galactosyl transfer between GalCers and cholesterol in vitro with lower activity compared with their activity against GlcCers. This is Non-lysosomal glucosylceramidase from Homo sapiens (Human).